The following is a 69-amino-acid chain: Large ribosomal subunit protein uL29 (69 aa).

The protein belongs to the universal ribosomal protein uL29 family.

In Mycoplasmopsis agalactiae (strain NCTC 10123 / CIP 59.7 / PG2) (Mycoplasma agalactiae), this protein is Large ribosomal subunit protein uL29.